The following is a 680-amino-acid chain: Zinc finger protein OBI1 (680 aa).

The KRAB domain occupies 16–87 (VSFEDVAVDF…AEATEQCLPG (72 aa)). The C2H2-type 1; degenerate zinc-finger motif lies at 263-280 (CHKIFPNKTELSNHDAMH). C2H2-type zinc fingers lie at residues 455-477 (FRCNDCLKTFSHKSQLERHQRMH), 483-505 (HECKECRKAFCHKSHLIRHQGIH), 511-533 (YECNECKKSFYLRSQLTLHERTH), 539-561 (FECKECRKAFSRNSHLTQHQKIH), 567-589 (HKCKECGNAFARKSHLIQHQKTH), 595-617 (YECKECRKAFSRKSQLMQHETTH), 623-645 (YECKECRKTFYLKAYLTRHQVIH), and 651-673 (FECKKCGKAFSRKSYLTRHQKIH).

Post-translationally, polyubiquitinated, leading to its degradation via the ubiquitin-proteasome pathway. Expressed during osteogenic differentiation where levels increase from the first days of differentiation and remain high during the whole process. Highly expressed in lung.

Its subcellular location is the nucleus. Its function is as follows. May modulate osteogenic differentiation, at least in part, through the bone morphogenetic protein (BMP) signaling pathway, increasing RUNX2 activation and leading to osteoblast commitment and maturation. This chain is Zinc finger protein OBI1 (ObI1), found in Mus musculus (Mouse).